Consider the following 263-residue polypeptide: 4-hydroxy-2-oxo-heptane-1,7-dioate aldolase (263 aa).

The active-site Proton acceptor is histidine 45. Glutamine 147 provides a ligand contact to substrate. Glutamate 149 is an a divalent metal cation binding site. Alanine 174 and aspartate 175 together coordinate substrate. Position 175 (aspartate 175) interacts with a divalent metal cation.

Belongs to the HpcH/HpaI aldolase family. In terms of assembly, homohexamer; trimer of dimers. It depends on a divalent metal cation as a cofactor.

The catalysed reaction is 4-hydroxy-2-oxoheptanedioate = succinate semialdehyde + pyruvate. Its pathway is aromatic compound metabolism; 4-hydroxyphenylacetate degradation; pyruvate and succinate semialdehyde from 4-hydroxyphenylacetate: step 7/7. Its function is as follows. Catalyzes the reversible retro-aldol cleavage of 4-hydroxy-2-ketoheptane-1,7-dioate (HKHD) to pyruvate and succinic semialdehyde. This Salmonella arizonae (strain ATCC BAA-731 / CDC346-86 / RSK2980) protein is 4-hydroxy-2-oxo-heptane-1,7-dioate aldolase.